Here is a 124-residue protein sequence, read N- to C-terminus: KESSAMKFQRQHMDSSGSPSTNANYCNEMMKGRNMTQGYCKPVNTFVHEPLADVQAVCFQKNVPCKNGQSNCYQSNSNMHITDCRLTSNSKYPNCSYRTSRENKGIIVACEGNPYVPVHFDASV.

The tract at residues 1-24 (KESSAMKFQRQHMDSSGSPSTNAN) is disordered. The substrate site is built by Lys-7 and Arg-10. The Proton acceptor role is filled by His-12. A compositionally biased stretch (polar residues) spans 14 to 24 (DSSGSPSTNAN). Cystine bridges form between Cys-26–Cys-84, Cys-40–Cys-95, Cys-58–Cys-110, and Cys-65–Cys-72. Asn-34 carries N-linked (GlcNAc...) asparagine glycosylation. Substrate is bound by residues 41 to 45 (KPVNT), Lys-66, and Arg-85. Catalysis depends on His-119, which acts as the Proton donor.

It belongs to the pancreatic ribonuclease family. Monomer. Interacts with and forms tight 1:1 complexes with RNH1. Dimerization of two such complexes may occur. Interaction with RNH1 inhibits this protein. In terms of tissue distribution, pancreas.

It is found in the secreted. It catalyses the reaction an [RNA] containing cytidine + H2O = an [RNA]-3'-cytidine-3'-phosphate + a 5'-hydroxy-ribonucleotide-3'-[RNA].. The enzyme catalyses an [RNA] containing uridine + H2O = an [RNA]-3'-uridine-3'-phosphate + a 5'-hydroxy-ribonucleotide-3'-[RNA].. Endonuclease that catalyzes the cleavage of RNA on the 3' side of pyrimidine nucleotides. Acts on single-stranded and double-stranded RNA. The sequence is that of Ribonuclease pancreatic (RNASE1) from Chinchilla chinchilla (Short-tailed chinchilla).